The following is a 219-amino-acid chain: Large ribosomal subunit protein uL3 (219 aa).

Residues 133 to 145 show a composition bias toward polar residues; the sequence is GRASHGNSRSHNV. The tract at residues 133–153 is disordered; sequence GRASHGNSRSHNVPGSIGMAQ. Residue Q153 is modified to N5-methylglutamine.

It belongs to the universal ribosomal protein uL3 family. Part of the 50S ribosomal subunit. Forms a cluster with proteins L14 and L19. Post-translationally, methylated by PrmB.

One of the primary rRNA binding proteins, it binds directly near the 3'-end of the 23S rRNA, where it nucleates assembly of the 50S subunit. This is Large ribosomal subunit protein uL3 from Paraburkholderia phymatum (strain DSM 17167 / CIP 108236 / LMG 21445 / STM815) (Burkholderia phymatum).